Reading from the N-terminus, the 510-residue chain is NAD(P)H-quinone oxidoreductase subunit 2 A, chloroplastic (510 aa).

A run of 13 helical transmembrane segments spans residues 24–44, 59–79, 99–119, 124–144, 149–169, 183–203, 229–249, 295–315, 323–343, 347–367, 395–415, 418–438, and 484–504; these read LLLFHGSFIFPECILIFGLIL, WFYFISSTSLVMSITALLFRW, IFQFLILLCSTLCIPLSVEYI, MAITEFLLFVLTATLGGMFLC, LITIFVAPECFSLCSYLLSGY, YLLMGGASSSILVHGFSWLYG, ISIALLSITVGIGFKLSPAPF, WHLLLEILAILSMILGNLIAI, MLAYSSIGQIGYVIIGIIVGD, GYASMITYMLFYISMNLGTFA, ALSSALCLLSLGGIPPLAGFF, LHLFWCGWQAGLYFLVSIGLL, and MIVCVIASTIPGISMNPIIAI.

It belongs to the complex I subunit 2 family. As to quaternary structure, NDH is composed of at least 16 different subunits, 5 of which are encoded in the nucleus.

It is found in the plastid. The protein resides in the chloroplast thylakoid membrane. It carries out the reaction a plastoquinone + NADH + (n+1) H(+)(in) = a plastoquinol + NAD(+) + n H(+)(out). The enzyme catalyses a plastoquinone + NADPH + (n+1) H(+)(in) = a plastoquinol + NADP(+) + n H(+)(out). NDH shuttles electrons from NAD(P)H:plastoquinone, via FMN and iron-sulfur (Fe-S) centers, to quinones in the photosynthetic chain and possibly in a chloroplast respiratory chain. The immediate electron acceptor for the enzyme in this species is believed to be plastoquinone. Couples the redox reaction to proton translocation, and thus conserves the redox energy in a proton gradient. The protein is NAD(P)H-quinone oxidoreductase subunit 2 A, chloroplastic of Amborella trichopoda.